Reading from the N-terminus, the 329-residue chain is Lipoyl synthase (329 aa).

7 residues coordinate [4Fe-4S] cluster: Cys72, Cys77, Cys83, Cys98, Cys102, Cys105, and Ser313. The Radical SAM core domain maps to 83 to 303; it reads CWSHGTATIM…QIGLKKGFFE (221 aa).

This sequence belongs to the radical SAM superfamily. Lipoyl synthase family. It depends on [4Fe-4S] cluster as a cofactor.

The protein localises to the cytoplasm. It catalyses the reaction [[Fe-S] cluster scaffold protein carrying a second [4Fe-4S](2+) cluster] + N(6)-octanoyl-L-lysyl-[protein] + 2 oxidized [2Fe-2S]-[ferredoxin] + 2 S-adenosyl-L-methionine + 4 H(+) = [[Fe-S] cluster scaffold protein] + N(6)-[(R)-dihydrolipoyl]-L-lysyl-[protein] + 4 Fe(3+) + 2 hydrogen sulfide + 2 5'-deoxyadenosine + 2 L-methionine + 2 reduced [2Fe-2S]-[ferredoxin]. It functions in the pathway protein modification; protein lipoylation via endogenous pathway; protein N(6)-(lipoyl)lysine from octanoyl-[acyl-carrier-protein]: step 2/2. Functionally, catalyzes the radical-mediated insertion of two sulfur atoms into the C-6 and C-8 positions of the octanoyl moiety bound to the lipoyl domains of lipoate-dependent enzymes, thereby converting the octanoylated domains into lipoylated derivatives. The chain is Lipoyl synthase from Legionella pneumophila (strain Paris).